A 493-amino-acid polypeptide reads, in one-letter code: GTPase Der (493 aa).

In terms of domain architecture, EngA-type G 1 spans 3-166 (PVIALVGRPN…EALGIFPKDN (164 aa)). Residues 9–16 (GRPNVGKS), 56–60 (DTGGI), and 118–121 (NKVD) contribute to the GTP site. Residues 167-184 (VEEEGEGEPASEEVAEGE) show a composition bias toward acidic residues. Residues 167–195 (VEEEGEGEPASEEVAEGEEPTRIPGPSEK) are disordered. The 174-residue stretch at 198 to 371 (IKIAIIGRPN…SVQESFRSAV (174 aa)) folds into the EngA-type G 2 domain. GTP-binding positions include 204–211 (GRPNVGKS), 251–255 (DTAGV), and 316–319 (NKWD). A KH-like domain is found at 372 to 456 (TRWPTSRLTS…PIRIEYKGGE (85 aa)). Residues 454–463 (GGENPYEGKK) show a composition bias toward basic and acidic residues. Residues 454–493 (GGENPYEGKKNSLTARQVNKKRRLMSHHKKAEKKKKDKRR) are disordered. The span at 471 to 493 (VNKKRRLMSHHKKAEKKKKDKRR) shows a compositional bias: basic residues.

The protein belongs to the TRAFAC class TrmE-Era-EngA-EngB-Septin-like GTPase superfamily. EngA (Der) GTPase family. As to quaternary structure, associates with the 50S ribosomal subunit.

Functionally, GTPase that plays an essential role in the late steps of ribosome biogenesis. This is GTPase Der from Pseudomonas aeruginosa (strain LESB58).